Reading from the N-terminus, the 191-residue chain is MSLISRLKAVVAGDDFLDDDFDELDYASEDEFNGNDDLKQNYKKSNALSNSNPFEFMNNNRTSNVVGMPGIANSSSEVNLMEPRSFDEMPQAIQALRERKTVILNLTMMDPDQAQRAVDFVAGGTYAIDGHQERVGESIFLFAPSCVNVTSSFPEEASPSNVSSKKTSQYKFETNTTPEPAWGESKLSAYN.

Residues F153–P178 are compositionally biased toward polar residues. Residues F153–N191 are disordered.

It belongs to the SepF family. As to quaternary structure, homodimer. Interacts with FtsZ.

It localises to the cytoplasm. Cell division protein that is part of the divisome complex and is recruited early to the Z-ring. Probably stimulates Z-ring formation, perhaps through the cross-linking of FtsZ protofilaments. Its function overlaps with FtsA. The sequence is that of Cell division protein SepF from Prochlorococcus marinus subsp. pastoris (strain CCMP1986 / NIES-2087 / MED4).